The primary structure comprises 256 residues: Enkurin (256 aa).

The SH3-binding motif lies at 83–89; sequence PKKPAVP. In terms of domain architecture, Enkurin spans 160–252; sequence KRNEEIKKAQ…IIEKHKIIYI (93 aa). Residues 160 to 255 are interaction with TRPC proteins; sequence KRNEEIKKAQ…KHKIIYIANN (96 aa). The IQ domain occupies 176 to 187; it reads IQENLKKAAMKR.

As to quaternary structure, microtubule inner protein component of sperm flagellar doublet microtubules. Binds calmodulin via its IQ domain. Interacts with TRPC1, TRPC2, TRPC5, but not TRPC3. Interacts with CFAP45. As to expression, expressed in airway epithelial cells.

The protein localises to the cytoplasm. The protein resides in the cytoskeleton. It localises to the cilium axoneme. Its subcellular location is the flagellum axoneme. In terms of biological role, adapter that functions to localize a calcium-sensitive signal transduction machinery in sperm to a calcium-permeable ion channel. Microtubule inner protein (MIP) part of the dynein-decorated doublet microtubules (DMTs) in cilia axoneme, which is required for motile cilia beating. This chain is Enkurin, found in Homo sapiens (Human).